The sequence spans 310 residues: Protease HtpX homolog (310 aa).

2 consecutive transmembrane segments (helical) span residues 16–36 and 55–75; these read NAVL…VDVI and IFPT…VVCI. His-166 is a binding site for Zn(2+). Glu-167 is a catalytic residue. His-170 is a binding site for Zn(2+). 2 helical membrane-spanning segments follow: residues 182-202 and 214-234; these read VGIL…FFMG and MILL…QMYL. Glu-239 contacts Zn(2+).

The protein belongs to the peptidase M48B family. Zn(2+) serves as cofactor.

It localises to the cell inner membrane. This Helicobacter pylori (strain Shi470) protein is Protease HtpX homolog.